We begin with the raw amino-acid sequence, 144 residues long: Large ribosomal subunit protein uL15 (144 aa).

The segment at 1-52 (MRLNTLSPAEGAKHAPKRVGRGIGSGLGKTAGRGHKGQNSRSGGGVRRGFEG) is disordered. Gly residues predominate over residues 21-31 (RGIGSGLGKTA).

It belongs to the universal ribosomal protein uL15 family. Part of the 50S ribosomal subunit.

Functionally, binds to the 23S rRNA. The polypeptide is Large ribosomal subunit protein uL15 (Yersinia pseudotuberculosis serotype O:1b (strain IP 31758)).